The following is a 1199-amino-acid chain: DNA-directed RNA polymerase subunit beta (1199 aa).

The interval 1175–1199 (EEKKAHEAAAQATDGKSANSTDDKK) is disordered. Residues 1188-1199 (DGKSANSTDDKK) are compositionally biased toward polar residues.

This sequence belongs to the RNA polymerase beta chain family. In terms of assembly, the RNAP catalytic core consists of 2 alpha, 1 beta, 1 beta' and 1 omega subunit. When a sigma factor is associated with the core the holoenzyme is formed, which can initiate transcription.

The enzyme catalyses RNA(n) + a ribonucleoside 5'-triphosphate = RNA(n+1) + diphosphate. Functionally, DNA-dependent RNA polymerase catalyzes the transcription of DNA into RNA using the four ribonucleoside triphosphates as substrates. This chain is DNA-directed RNA polymerase subunit beta, found in Lacticaseibacillus casei (strain BL23) (Lactobacillus casei).